The following is a 268-amino-acid chain: MFLRRVHPVRLGHASQRSLTTTKSRNESTTTTVEAPQAAPSPPPDAFTEEFLRNQIKVTELQRVILGVGSSLAALVNPRRHDMIACLGETTGVPALDAIRRQMLASDEGRQILADRPRINTRTVDMAALKALPETSFGHQYVHFLEKHDITPDSRAEVRFMDDPELAYVMTRYREVHDLVHTVLGMPTNMLGEVAVKWVEALNTGLPMCYGGAVFGAQRQNYLRHYLPWALRMGRQVRPLMNVYWEKRWEQDMAELRQELNIEELVIN.

The segment covering 1–10 (MFLRRVHPVR) has biased composition (basic residues). The transit peptide at 1 to 18 (MFLRRVHPVRLGHASQRS) directs the protein to the mitochondrion. The disordered stretch occupies residues 1-44 (MFLRRVHPVRLGHASQRSLTTTKSRNESTTTTVEAPQAAPSPPP). Over residues 20 to 38 (TTTKSRNESTTTTVEAPQA) the composition is skewed to low complexity. Residues His177, Asp178, His181, and Glu193 each coordinate Zn(2+).

Belongs to the COQ4 family. As to quaternary structure, component of a multi-subunit COQ enzyme complex. The cofactor is Zn(2+).

The protein localises to the mitochondrion inner membrane. It catalyses the reaction a 4-hydroxy-3-methoxy-5-(all-trans-polyprenyl)benzoate + H(+) = a 2-methoxy-6-(all-trans-polyprenyl)phenol + CO2. It functions in the pathway cofactor biosynthesis; ubiquinone biosynthesis. Its function is as follows. Lyase that catalyzes the C1-decarboxylation of 4-hydroxy-3-methoxy-5-(all-trans-polyprenyl)benzoic acid into 2-methoxy-6-(all-trans-polyprenyl)phenol during ubiquinone biosynthesis. This is Ubiquinone biosynthesis protein COQ4 homolog 1, mitochondrial from Culex quinquefasciatus (Southern house mosquito).